Consider the following 1353-residue polypeptide: Adenylate cyclase type 9 (1353 aa).

Disordered stretches follow at residues 1-27 and 49-71; these read MASP…DSNS and SISS…GGGG. At 1–117 the chain is on the cytoplasmic side; the sequence is MASPPHQQLL…CFPQTQRRFR (117 aa). The span at 16 to 27 shows a compositional bias: polar residues; the sequence is EVSCDSSGDSNS. The segment covering 49–66 has biased composition (low complexity); it reads SISSSCSSSGDSGGVPRR. A helical transmembrane segment spans residues 118 to 138; it reads YALFYIGFACLLWSIYFAVHM. Over 139–141 the chain is Extracellular; the sequence is RSR. Residues 142-162 traverse the membrane as a helical segment; sequence LIVMVAPALCFLLVCVGFFLF. The Cytoplasmic segment spans residues 163–171; the sequence is TFTKLYARH. A helical transmembrane segment spans residues 172–192; it reads YAWTSLALTLLVFALTLAAQF. Over 193 to 215 the chain is Extracellular; the sequence is QVLTPVSGRGDSSNLTATARPTD. Asparagine 206 carries N-linked (GlcNAc...) asparagine glycosylation. A helical transmembrane segment spans residues 216-235; the sequence is TCLSQVGSFSMCIEVLFLLY. The Cytoplasmic segment spans residues 236 to 241; the sequence is TVMHLP. Residues 242–259 form a helical membrane-spanning segment; it reads LYLSLCLGVAYSVLFETF. Over 260 to 280 the chain is Extracellular; sequence GYHFRDEACFPSPGAGALHWE. Residues 281 to 301 form a helical membrane-spanning segment; the sequence is LLSRGLLHGCIHAIGVHLFVM. At 302–786 the chain is on the cytoplasmic side; it reads SQVRSRSTFL…VKTFASPTFS (485 aa). The disordered stretch occupies residues 349–375; sequence QGDEESENSVKRHATSSPKNRKKKSSI. Residues 359–374 show a composition bias toward basic residues; sequence KRHATSSPKNRKKKSS. A Guanylate cyclase 1 domain is found at 394 to 521; the sequence is SILFADIVGF…NDVNLANLME (128 aa). Mg(2+)-binding residues include aspartate 399, isoleucine 400, and aspartate 443. ATP contacts are provided by residues 399–404, 441–443, and arginine 487; these read DIVGFT and LGD. The residue at position 610 (serine 610) is a Phosphoserine. The tract at residues 642 to 684 is disordered; sequence EAGAEGGAPQNGCQDEHKNSTKASGGPNPKTQNGLLSPPQEEK. 3 positions are modified to phosphoserine: serine 688, serine 691, and serine 706. The helical transmembrane segment at 787 to 807 threads the bilayer; the sequence is SLLDVFLSTTVFLTLSTTCFL. Residues 808–818 are Extracellular-facing; it reads KYEAATVPPPP. Residues 819 to 839 form a helical membrane-spanning segment; that stretch reads AALAVFSAALLLEVLSLAVSI. Over 840–867 the chain is Cytoplasmic; it reads RMVFFLEDVMACTKRLLEWIAGWLPRHC. The chain crosses the membrane as a helical span at residues 868-888; it reads IGAILVSLPALAVYSHVTSEY. At 889 to 891 the chain is on the extracellular side; the sequence is ETN. A helical transmembrane segment spans residues 892-912; it reads IHFPVFTGSAALIAVVHYCNF. At 913–920 the chain is on the cytoplasmic side; the sequence is CQLSSWMR. Residues 921 to 941 traverse the membrane as a helical segment; sequence SSLATVVGAGPLLLLYVSLCP. Over 942–975 the chain is Extracellular; that stretch reads DSSVLTSPLDAVQNFSSERNPCNSSVPRDLRRPA. Asparagine 955 and asparagine 964 each carry an N-linked (GlcNAc...) asparagine glycan. A helical transmembrane segment spans residues 976–996; the sequence is SLIGQEVVLVFFLLLLLVWFL. Residues 997–1353 lie on the Cytoplasmic side of the membrane; the sequence is NREFEVSYRL…LTKLNVSKSV (357 aa). Residues 1058–1198 enclose the Guanylate cyclase 2 domain; sequence GVIFASIVNF…DTVNIASRMD (141 aa). ATP-binding positions include lysine 1108, 1185–1187, 1192–1196, and lysine 1232; these read DIW and NIASR. Phosphoserine is present on residues serine 1257, serine 1259, serine 1295, and serine 1307. Residues 1292–1301 are compositionally biased toward polar residues; sequence SLGSDSSTQA. The disordered stretch occupies residues 1292-1326; that stretch reads SLGSDSSTQAKDAHLSPKRPWKEPVKAEERGRFGK. Over residues 1302–1326 the composition is skewed to basic and acidic residues; sequence KDAHLSPKRPWKEPVKAEERGRFGK.

Belongs to the adenylyl cyclase class-4/guanylyl cyclase family. It depends on Mg(2+) as a cofactor. Mn(2+) is required as a cofactor. As to expression, detected in skeletal muscle, pancreas, lung, heart, kidney, liver, brain and placenta. Expressed in multiple cells of the lung, with expression highest in airway smooth muscle.

Its subcellular location is the cell membrane. The catalysed reaction is ATP = 3',5'-cyclic AMP + diphosphate. Its activity is regulated as follows. Insensitive to calcium/calmodulin, forskolin and somatostatin. Stimulated by beta-adrenergic receptor activation. Activity is down-regulated by calcium/calcineurin. Adenylyl cyclase that catalyzes the formation of the signaling molecule cAMP in response to activation of G protein-coupled receptors. Contributes to signaling cascades activated by CRH (corticotropin-releasing factor), corticosteroids and beta-adrenergic receptors. The polypeptide is Adenylate cyclase type 9 (ADCY9) (Homo sapiens (Human)).